The chain runs to 870 residues: Leucine--tRNA ligase (870 aa).

The short motif at 42-52 (PYPSGKLHMGH) is the 'HIGH' region element. The short motif at 629-633 (KMSKS) is the 'KMSKS' region element. Lys-632 is an ATP binding site.

Belongs to the class-I aminoacyl-tRNA synthetase family.

The protein resides in the cytoplasm. It catalyses the reaction tRNA(Leu) + L-leucine + ATP = L-leucyl-tRNA(Leu) + AMP + diphosphate. The polypeptide is Leucine--tRNA ligase (Azotobacter vinelandii (strain DJ / ATCC BAA-1303)).